We begin with the raw amino-acid sequence, 97 residues long: Secreted RxLR effector protein BLR05 (97 aa).

Residues 1 to 21 form the signal peptide; the sequence is MGPQHLLALVVVSILVAAGNA. The RxLR-dEER signature appears at 32–60; the sequence is RALRPSVIADQEHAVHAIPATNFISKDED. Residues 69–89 traverse the membrane as a helical segment; that stretch reads IEIIRIAIFSLLVVGVFAIMA.

This sequence belongs to the RxLR effector family. In terms of assembly, interacts with host transcription factor NAC069.

The protein localises to the secreted. It is found in the host endoplasmic reticulum membrane. Functionally, secreted effector that inhibits stress-induced relocalization of the transcription factor NAC069 to the nucleus, thus affecting its broad role in abiotic and biotic stress responses. This chain is Secreted RxLR effector protein BLR05, found in Bremia lactucae (Lettuce downy mildew).